A 492-amino-acid chain; its full sequence is Pre-mRNA-splicing factor sap61 (492 aa).

Residues 243–267 (FYCEVCQKFFGKITVFEAHKKSKAH) form a C2H2-type zinc finger. Disordered regions lie at residues 268-291 (NKAVKRMQSSSPSTTSNTNEKQKG) and 337-365 (AAEREAFEQSTPSVSVEGNQDEESDQDDE). A compositionally biased stretch (low complexity) spans 276–286 (SSSPSTTSNTN). The segment covering 345–354 (QSTPSVSVEG) has biased composition (polar residues). Positions 355–365 (NQDEESDQDDE) are enriched in acidic residues. Position 360 is a phosphoserine (Ser-360). The Matrin-type zinc-finger motif lies at 397-428 (FPCEICGNYVYMGRKAFDKHFTEQRHIYGLKC).

This sequence belongs to the SF3A3 family. Belongs to the 40S cdc5-associated complex (or cwf complex), a spliceosome sub-complex reminiscent of a late-stage spliceosome composed of the U2, U5 and U6 snRNAs and at least brr2, cdc5, cwf2/prp3, cwf3/syf1, cwf4/syf3, cwf5/ecm2, spp42/cwf6, cwf7/spf27, cwf8, cwf9, cwf10, cwf11, cwf12, prp45/cwf13, cwf14, cwf15, cwf16, cwf17, cwf18, cwf19, cwf20, cwf21, cwf22, cwf23, cwf24, cwf25, cwf26, cyp7/cwf27, cwf28, cwf29/ist3, lea1, msl1, prp5/cwf1, prp10, prp12/sap130, prp17, prp22, sap61, sap62, sap114, sap145, slu7, smb1, smd1, smd3, smf1, smg1 and syf2.

It localises to the nucleus. The protein localises to the cytoplasm. Its function is as follows. Involved in mRNA splicing where it associates with cdc5 and the other cwf proteins as part of the spliceosome. In Schizosaccharomyces pombe (strain 972 / ATCC 24843) (Fission yeast), this protein is Pre-mRNA-splicing factor sap61 (sap61).